The primary structure comprises 246 residues: 3-deoxy-manno-octulosonate cytidylyltransferase (246 aa).

It belongs to the KdsB family.

The protein localises to the cytoplasm. The enzyme catalyses 3-deoxy-alpha-D-manno-oct-2-ulosonate + CTP = CMP-3-deoxy-beta-D-manno-octulosonate + diphosphate. Its pathway is nucleotide-sugar biosynthesis; CMP-3-deoxy-D-manno-octulosonate biosynthesis; CMP-3-deoxy-D-manno-octulosonate from 3-deoxy-D-manno-octulosonate and CTP: step 1/1. It functions in the pathway bacterial outer membrane biogenesis; lipopolysaccharide biosynthesis. Its function is as follows. Activates KDO (a required 8-carbon sugar) for incorporation into bacterial lipopolysaccharide in Gram-negative bacteria. The polypeptide is 3-deoxy-manno-octulosonate cytidylyltransferase (Paramagnetospirillum magneticum (strain ATCC 700264 / AMB-1) (Magnetospirillum magneticum)).